The chain runs to 216 residues: Adenylate kinase (216 aa).

10–15 (GSGKGT) is a binding site for ATP. The interval 30–59 (STGDMLRAAVKEGTPMGVKAKAKMDAGALV) is NMP. AMP-binding positions include threonine 31, arginine 36, 57–59 (ALV), 85–88 (GFPR), and glutamine 92. The segment at 126 to 163 (GRRTCRDCGKMYHVEFDAPAVADKCDKCGGQLFQRDDD) is LID. Position 127 (arginine 127) interacts with ATP. Zn(2+) contacts are provided by cysteine 130, cysteine 133, cysteine 150, and cysteine 153. Positions 160 and 171 each coordinate AMP. Lysine 199 serves as a coordination point for ATP.

This sequence belongs to the adenylate kinase family. In terms of assembly, monomer.

It localises to the cytoplasm. It carries out the reaction AMP + ATP = 2 ADP. The protein operates within purine metabolism; AMP biosynthesis via salvage pathway; AMP from ADP: step 1/1. Functionally, catalyzes the reversible transfer of the terminal phosphate group between ATP and AMP. Plays an important role in cellular energy homeostasis and in adenine nucleotide metabolism. The protein is Adenylate kinase of Syntrophotalea carbinolica (strain DSM 2380 / NBRC 103641 / GraBd1) (Pelobacter carbinolicus).